A 402-amino-acid chain; its full sequence is Transcription regulatory protein OpdE (402 aa).

The next 12 membrane-spanning stretches (helical) occupy residues 22–42 (VLAI…PVSL), 60–80 (GIAI…SVAG), 86–106 (TLLL…ALAP), 108–128 (YFVY…FWSM), 147–167 (ALVN…GAWL), 170–190 (LIGW…ALAW), 220–240 (PGVM…FSLF), 256–276 (AHVS…TLLI), 296–316 (ALIA…VVLL), 318–338 (LWGL…ARVF), 348–368 (LFVA…GLLF), and 375–395 (ATFF…ILTA).

It to B.subtilis YwfA.

The protein localises to the cell membrane. Regulates the expression of oprD which encodes the imipenem-specific porin. This is Transcription regulatory protein OpdE (opdE) from Pseudomonas aeruginosa (strain ATCC 15692 / DSM 22644 / CIP 104116 / JCM 14847 / LMG 12228 / 1C / PRS 101 / PAO1).